We begin with the raw amino-acid sequence, 332 residues long: L-lactate dehydrogenase A chain (332 aa).

NAD(+) is bound by residues Gly-29 to Lys-57 and Arg-99. Positions 106, 138, and 169 each coordinate substrate. Asn-138 is an NAD(+) binding site. His-193 functions as the Proton acceptor in the catalytic mechanism. Thr-248 serves as a coordination point for substrate.

This sequence belongs to the LDH/MDH superfamily. LDH family. Homotetramer.

It localises to the cytoplasm. It carries out the reaction (S)-lactate + NAD(+) = pyruvate + NADH + H(+). The protein operates within fermentation; pyruvate fermentation to lactate; (S)-lactate from pyruvate: step 1/1. Functionally, interconverts simultaneously and stereospecifically pyruvate and lactate with concomitant interconversion of NADH and NAD(+). This chain is L-lactate dehydrogenase A chain (ldha), found in Sphyraena lucasana (Lucas barracuda).